Consider the following 302-residue polypeptide: Lysosomal thioesterase PPT2 (302 aa).

An N-terminal signal peptide occupies residues 1-27 (MPGLWRQRLPSAWALLLLPFLPLLMPA). N-linked (GlcNAc...) asparagine glycosylation is present at asparagine 60. 2 disulfide bridges follow: cysteine 109–cysteine 117 and cysteine 165–cysteine 176. Serine 111 functions as the Nucleophile in the catalytic mechanism. N-linked (GlcNAc...) asparagine glycosylation is found at asparagine 190 and asparagine 206. Aspartate 228 is a catalytic residue. The N-linked (GlcNAc...) asparagine glycan is linked to asparagine 245. Cysteine 276 and cysteine 296 are joined by a disulfide. Histidine 283 is a catalytic residue. An N-linked (GlcNAc...) asparagine glycan is attached at asparagine 289.

It belongs to the palmitoyl-protein thioesterase family. As to expression, expressed throughout the brain, primarily in neurons, and at lower levels in glial cells.

It localises to the lysosome. The catalysed reaction is hexadecanoyl-CoA + H2O = hexadecanoate + CoA + H(+). It carries out the reaction S-hexadecanoyl-N-acetylcysteamine + H2O = N-acetylcysteamine + hexadecanoate + H(+). In terms of biological role, catalyzes the cleavage of thioester bonds from S-palmitoyl-CoA or S-palmitoyl-N-acetylcysteamine (unbranched structures) but does not have activity against palmitoylcysteine or palmitoylated proteins, branched structures or bulky head groups. Conversely, hydrolyzes both long and short chain fatty acyl-CoA substrate. The polypeptide is Lysosomal thioesterase PPT2 (Ppt2) (Mus musculus (Mouse)).